The sequence spans 660 residues: MEHIRTPKVENVRLVDRVSPKKAALGTLYLTATHVIFVENSPDPRKETWILHSQISTIEKQATTATGCPLLIRCKNFQIIQLIIPQERDCHDVYISLIRLARPVKYEELYCFSFNPMLDKEEREQGWVLIDLSEEYTRMGLPNHYWQLSDVNRDYRVCDSYPTELYVPKSATAHIIVGSSKFRSRRRFPVLSYYYKDNHASICRSSQPLSGFSARCLEDEQMLQAIRKANPGSDFVYVVDTRPKLNAMANRAAGKGYENEDNYSNIKFQFIGIENIHVMRNSLQKMLEVCELKSPSMSDFLWGLENSGWLRHIKAIMDAGIFIAKAVSEEGASVLVHCSDGWDRTAQVCSVASLLLDPHYRTLKGFMVLIEKDWISFGHKFNHRYGNLDGDPKEISPVIDQFIECVWQLMEQFPCAFEFNERFLIHIQHHIYSCQFGNFLCNSQKERRELKIQERTYSLWAHLWKNRADYLNPLFRADHSQTQGTLHLPTTPCNFMYKFWSGMYNRFEKGMQPRQSVTDYLMAVKEETQQLEEELEALEERLEKIQKVQLNCTKVKSKQSEPSKHSGFSTSDNSIANTPQDYSGNMKSFPSRSPSQGDEDSALILTQDNLKSSDPDLSANSDQESGVEDLSCRSPSGGEHAPSEDSGKDRDSDEAVFLTA.

One can recognise a Myotubularin phosphatase domain in the interval 126–504 (GWVLIDLSEE…FMYKFWSGMY (379 aa)). Asn-250, Asn-275, and Ile-276 together coordinate a 1,2-diacyl-sn-glycero-3-phospho-(1D-myo-inositol-3-phosphate). Cys-338 serves as the catalytic Phosphocysteine intermediate. The a 1,2-diacyl-sn-glycero-3-phospho-(1D-myo-inositol-3-phosphate) site is built by Ser-339, Asp-340, Gly-341, Trp-342, Asp-343, Arg-344, and Arg-384. Residues 521–551 (LMAVKEETQQLEEELEALEERLEKIQKVQLN) are a coiled coil. The tract at residues 554 to 660 (KVKSKQSEPS…DSDEAVFLTA (107 aa)) is disordered. A compositionally biased stretch (polar residues) spans 566 to 596 (SGFSTSDNSIANTPQDYSGNMKSFPSRSPSQ). Thr-578 bears the Phosphothreonine mark. The span at 641-653 (APSEDSGKDRDSD) shows a compositional bias: basic and acidic residues.

The protein belongs to the protein-tyrosine phosphatase family. Non-receptor class myotubularin subfamily. As to quaternary structure, heterodimer (via C-terminus) with MTMR9 (via coiled coil domain); the interaction enhances MTMR7 catalytic activity. Does not homodimerize. Interacts with RAB1B (in GDP-bound form). Expressed specifically in brain.

Its subcellular location is the cytoplasm. It is found in the endomembrane system. It carries out the reaction a 1,2-diacyl-sn-glycero-3-phospho-(1D-myo-inositol-3-phosphate) + H2O = a 1,2-diacyl-sn-glycero-3-phospho-(1D-myo-inositol) + phosphate. The enzyme catalyses 1D-myo-inositol 1,3-bisphosphate + H2O = 1D-myo-inositol 1-phosphate + phosphate. Its activity is regulated as follows. Interaction with MTMR9 increases phosphatase activity. Functionally, lipid phosphatase that specifically dephosphorylates the D-3 position of phosphatidylinositol 3-phosphate (PtdIns(3)P) and inositol 1,3-bisphosphate (Ins(1,3)P2). This chain is Phosphatidylinositol-3-phosphate phosphatase MTMR7, found in Homo sapiens (Human).